The primary structure comprises 200 residues: NADH-quinone oxidoreductase subunit C (200 aa).

Belongs to the complex I 30 kDa subunit family. In terms of assembly, NDH-1 is composed of 14 different subunits. Subunits NuoB, C, D, E, F, and G constitute the peripheral sector of the complex.

Its subcellular location is the cell inner membrane. It carries out the reaction a quinone + NADH + 5 H(+)(in) = a quinol + NAD(+) + 4 H(+)(out). In terms of biological role, NDH-1 shuttles electrons from NADH, via FMN and iron-sulfur (Fe-S) centers, to quinones in the respiratory chain. The immediate electron acceptor for the enzyme in this species is believed to be ubiquinone. Couples the redox reaction to proton translocation (for every two electrons transferred, four hydrogen ions are translocated across the cytoplasmic membrane), and thus conserves the redox energy in a proton gradient. This chain is NADH-quinone oxidoreductase subunit C, found in Rhizobium leguminosarum bv. trifolii (strain WSM2304).